A 282-amino-acid chain; its full sequence is Pantothenate synthetase (282 aa).

ATP is bound at residue 30–37 (MGNLHQGH). His37 (proton donor) is an active-site residue. A (R)-pantoate-binding site is contributed by Gln61. Position 61 (Gln61) interacts with beta-alanine. Position 149-152 (149-152 (GKKD)) interacts with ATP. Gln155 contacts (R)-pantoate. ATP-binding positions include Ile178 and 186–189 (MSSR).

The protein belongs to the pantothenate synthetase family. As to quaternary structure, homodimer.

Its subcellular location is the cytoplasm. The catalysed reaction is (R)-pantoate + beta-alanine + ATP = (R)-pantothenate + AMP + diphosphate + H(+). Its pathway is cofactor biosynthesis; (R)-pantothenate biosynthesis; (R)-pantothenate from (R)-pantoate and beta-alanine: step 1/1. Its function is as follows. Catalyzes the condensation of pantoate with beta-alanine in an ATP-dependent reaction via a pantoyl-adenylate intermediate. This is Pantothenate synthetase from Shewanella loihica (strain ATCC BAA-1088 / PV-4).